We begin with the raw amino-acid sequence, 232 residues long: Phosphatidylserine decarboxylase proenzyme (232 aa).

Residue S190 is the Schiff-base intermediate with substrate; via pyruvic acid of the active site. Position 190 is a pyruvic acid (Ser); by autocatalysis (S190).

Belongs to the phosphatidylserine decarboxylase family. PSD-A subfamily. As to quaternary structure, heterodimer of a large membrane-associated beta subunit and a small pyruvoyl-containing alpha subunit. Requires pyruvate as cofactor. Is synthesized initially as an inactive proenzyme. Formation of the active enzyme involves a self-maturation process in which the active site pyruvoyl group is generated from an internal serine residue via an autocatalytic post-translational modification. Two non-identical subunits are generated from the proenzyme in this reaction, and the pyruvate is formed at the N-terminus of the alpha chain, which is derived from the carboxyl end of the proenzyme. The post-translation cleavage follows an unusual pathway, termed non-hydrolytic serinolysis, in which the side chain hydroxyl group of the serine supplies its oxygen atom to form the C-terminus of the beta chain, while the remainder of the serine residue undergoes an oxidative deamination to produce ammonia and the pyruvoyl prosthetic group on the alpha chain.

The protein localises to the cell membrane. It catalyses the reaction a 1,2-diacyl-sn-glycero-3-phospho-L-serine + H(+) = a 1,2-diacyl-sn-glycero-3-phosphoethanolamine + CO2. It functions in the pathway phospholipid metabolism; phosphatidylethanolamine biosynthesis; phosphatidylethanolamine from CDP-diacylglycerol: step 2/2. In terms of biological role, catalyzes the formation of phosphatidylethanolamine (PtdEtn) from phosphatidylserine (PtdSer). In Bradyrhizobium diazoefficiens (strain JCM 10833 / BCRC 13528 / IAM 13628 / NBRC 14792 / USDA 110), this protein is Phosphatidylserine decarboxylase proenzyme.